Here is a 129-residue protein sequence, read N- to C-terminus: GM1b/asialo-GM1 oligosaccharide-binding R-type lectin (129 aa).

A carbohydrate contacts are provided by residues 21 to 23 (FYN), 26 to 28 (RKD), phenylalanine 32, and 37 to 40 (YDDQ).

Homodimer. In terms of tissue distribution, highest expression in the outer part of the mantle rim. Highly expressed in gills, with a much lower expression in the digestive gland and posterior adductor muscle. Scarcely detectable in foot.

With respect to regulation, hemagglutination activity requires divalent cations such as Ca(2+). Hemagglutination activity is weakly inhibited by monosaccharides such as D-Gal (25 mM), D-GalNAc (25 mM) and D-Fuc (25 mM) and by disaccharides such as melibiose (25 mM) and lactose (25 mM). Hemagglutination activity is inhibited by bovine submaxillary mucin, but not by porcine stomach mucin or fetuin. In terms of biological role, galbeta1-3GalNAcbeta1-4Galbeta1-4Glc oligosaccharide-binding lectin. Binds strongly to the oligosaccharides of ganglioside GM1b and to a lesser extent its precursor asialo-GM1. Binds weakly to asialo-GM2 oligosaccharide and to the glycan moiety of globo-series stage-specific embryonal antigen 4 (SSEA-4) hexaose. Binds galactose, N-acetylgalactose and lactose. Does not bind GM1. Does not bind to Gal-beta1,3-GalNAc (Thomsen-Friedenreich antigen), the oligosaccharide of GM1a ganglioside or SSEA-4 tetraose. Does not bind to N-glycans, O-glycans or glycosaminoglycans of glycoproteins. Does not bind Lewis glycans, derivatives of lactose or N-acetyllactosamine or blood group (ABH-type) oligosaccharides. Does not bind glucose. Has hemagglutination activity towards rabbit erythrocytes. Displays cytotoxic effects against various cultured cell lines including human breast (MCF-7), cervical (HeLa) and colon cancer (Caco2) cell lines, as well as dog kidney (MDCK) cell line that express asialo-GM1 oligosaccharide at their cell surface. Shows dose- and time-dependent activation of MKK3/6, ERK1/2 and p38 MAPK, as well as caspase-3/9 in HeLa cervical cancer cells. No cytotoxic effect on BT474 human breast cancer cell line. May be involved in recognition of glycans found on parasitic or symbiotic microorganisms. In Mytilisepta virgata (Purplish bifurcate mussel), this protein is GM1b/asialo-GM1 oligosaccharide-binding R-type lectin.